We begin with the raw amino-acid sequence, 45 residues long: Large ribosomal subunit protein bL34 (45 aa).

A disordered region spans residues 22-45; sequence RMRTKSGQNVIKARRRKGRARLTV. A compositionally biased stretch (basic residues) spans 33–45; the sequence is KARRRKGRARLTV.

Belongs to the bacterial ribosomal protein bL34 family.

This chain is Large ribosomal subunit protein bL34, found in Thermosynechococcus vestitus (strain NIES-2133 / IAM M-273 / BP-1).